A 243-amino-acid chain; its full sequence is Small ribosomal subunit protein uS3 (243 aa).

The KH type-2 domain maps to 39–107 (IRAYLIKELK…ETHLNIVEVR (69 aa)). The tract at residues 214–243 (ASERRGLEGDAQGPASRERGDRPDRRRENA) is disordered. The segment covering 229-243 (SRERGDRPDRRRENA) has biased composition (basic and acidic residues).

This sequence belongs to the universal ribosomal protein uS3 family. As to quaternary structure, part of the 30S ribosomal subunit. Forms a tight complex with proteins S10 and S14.

Its function is as follows. Binds the lower part of the 30S subunit head. Binds mRNA in the 70S ribosome, positioning it for translation. The polypeptide is Small ribosomal subunit protein uS3 (Agrobacterium fabrum (strain C58 / ATCC 33970) (Agrobacterium tumefaciens (strain C58))).